We begin with the raw amino-acid sequence, 206 residues long: uncharacterized protein (206 aa).

The N-terminal stretch at 1 to 22 (MPKLRLIGLTLLALSATAVSHA) is a signal peptide. The SH3b domain occupies 23–89 (EETRYVSDEL…IPLKQLSTEP (67 aa)). A helical transmembrane segment spans residues 169–191 (IIMQWFMYGGGVLGLGLLLGLVL).

This sequence to H.influenzae HI_1605.

It localises to the membrane. This is an uncharacterized protein from Escherichia coli O157:H7.